A 137-amino-acid chain; its full sequence is uncharacterized protein (137 aa).

3 helical membrane-spanning segments follow: residues 5–25 (ELLWPALITALATMLYLVLVI), 79–99 (IAAILGAVWLLGRILYAWGYY), and 109–129 (FALGSLSSMILVVGALLSILW).

The protein belongs to the MAPEG family.

It is found in the cell membrane. This is an uncharacterized protein from Synechocystis sp. (strain ATCC 27184 / PCC 6803 / Kazusa).